A 144-amino-acid polypeptide reads, in one-letter code: Large ribosomal subunit protein uL11m (144 aa).

Residues 1–32 (MASTRTTIIKLIVPAGKATPTPPIGPALGARG) constitute a mitochondrion transit peptide.

Belongs to the universal ribosomal protein uL11 family. In terms of assembly, component of the mitochondrial large ribosomal subunit (mt-LSU). Mature yeast 74S mitochondrial ribosomes consist of a small (37S) and a large (54S) subunit. The 37S small subunit contains a 15S ribosomal RNA (15S mt-rRNA) and at least 32 different proteins. The 54S large subunit contains a 21S rRNA (21S mt-rRNA) and at least 45 different proteins.

It localises to the mitochondrion. The protein localises to the cytoplasm. Component of the mitochondrial ribosome (mitoribosome), a dedicated translation machinery responsible for the synthesis of mitochondrial genome-encoded proteins, including at least some of the essential transmembrane subunits of the mitochondrial respiratory chain. The mitoribosomes are attached to the mitochondrial inner membrane and translation products are cotranslationally integrated into the membrane. This is Large ribosomal subunit protein uL11m from Schizosaccharomyces pombe (strain 972 / ATCC 24843) (Fission yeast).